Here is a 302-residue protein sequence, read N- to C-terminus: Recombination-associated protein RdgC (302 aa).

Belongs to the RdgC family.

The protein resides in the cytoplasm. It localises to the nucleoid. In terms of biological role, may be involved in recombination. The sequence is that of Recombination-associated protein RdgC from Halorhodospira halophila (strain DSM 244 / SL1) (Ectothiorhodospira halophila (strain DSM 244 / SL1)).